A 664-amino-acid chain; its full sequence is Methionine--tRNA ligase (664 aa).

The 'HIGH' region signature appears at Tyr-15–His-25. The 'KMSKS' region motif lies at Lys-310–Ser-314. Residue Lys-313 participates in ATP binding. Residues Asp-563 to Lys-664 enclose the tRNA-binding domain.

It belongs to the class-I aminoacyl-tRNA synthetase family. MetG type 2B subfamily. In terms of assembly, homodimer.

It is found in the cytoplasm. The catalysed reaction is tRNA(Met) + L-methionine + ATP = L-methionyl-tRNA(Met) + AMP + diphosphate. Is required not only for elongation of protein synthesis but also for the initiation of all mRNA translation through initiator tRNA(fMet) aminoacylation. This Listeria innocua serovar 6a (strain ATCC BAA-680 / CLIP 11262) protein is Methionine--tRNA ligase (metG).